Here is a 130-residue protein sequence, read N- to C-terminus: Small ribosomal subunit protein uS9 (130 aa).

It belongs to the universal ribosomal protein uS9 family.

The sequence is that of Small ribosomal subunit protein uS9 (rpsI) from Shigella flexneri.